Consider the following 134-residue polypeptide: Urease subunit beta (134 aa).

This sequence belongs to the urease beta subunit family. In terms of assembly, heterotrimer of UreA (gamma), UreB (beta) and UreC (alpha) subunits. Three heterotrimers associate to form the active enzyme.

Its subcellular location is the cytoplasm. The enzyme catalyses urea + 2 H2O + H(+) = hydrogencarbonate + 2 NH4(+). It functions in the pathway nitrogen metabolism; urea degradation; CO(2) and NH(3) from urea (urease route): step 1/1. In Staphylococcus saprophyticus subsp. saprophyticus (strain ATCC 15305 / DSM 20229 / NCIMB 8711 / NCTC 7292 / S-41), this protein is Urease subunit beta.